Here is a 175-residue protein sequence, read N- to C-terminus: uncharacterized protein (175 aa).

The N-terminal 11 residues, 1–11, are a transit peptide targeting the mitochondrion; sequence METWRKGSFRN. Residues 29–48 form a disordered region; sequence QGSILSQASTAGGDHEEYSN.

The protein localises to the mitochondrion. This is an uncharacterized protein from Mus musculus (Mouse).